The chain runs to 197 residues: Probable thymidylate kinase (197 aa).

Residue 7–14 (GLDGSGKT) participates in ATP binding.

The protein belongs to the thymidylate kinase family.

The catalysed reaction is dTMP + ATP = dTDP + ADP. The sequence is that of Probable thymidylate kinase from Halorubrum lacusprofundi (strain ATCC 49239 / DSM 5036 / JCM 8891 / ACAM 34).